The sequence spans 501 residues: Cytochrome P450 monooxygenase ccsG (501 aa).

Residues 1 to 28 (MMITLFTLAVVSIGFFLWWLLTVQPAVT) form the signal peptide. 2 N-linked (GlcNAc...) asparagine glycosylation sites follow: asparagine 115 and asparagine 154. Heme is bound at residue cysteine 443.

It belongs to the cytochrome P450 family. It depends on heme as a cofactor.

The protein operates within mycotoxin biosynthesis. Functionally, cytochrome P450 monooxygenase; part of the gene cluster that mediates the biosynthesis of a family of the mycotoxins cytochalasins E and K. The hybrid PKS-NRPS synthetase ccsA and the enoyl reductase ccsC are responsible for fusion of phenylalanine with an octaketide backbone and subsequent release of the stable tetramic acid precursor. The polyketide synthase module (PKS) of the PKS-NRPS ccsA is responsible for the synthesis of the octaketide backbone. The downstream nonribosomal peptide synthetase (NRPS) amidates the carboxyl end of the octaketide with a phenylalanine. A reductase-like domain (R) at the C-terminus catalyzes the reductive release of the polyketide-amino acid intermediate. Because ccsA lacks a designated enoylreductase (ER) domain, the required activity is provided the enoyl reductase ccsC. Upon formation of the 11-membered carbocycle-fused perhydroisoindolone intermediate, a number of oxidative steps are required to afford the final cytochalasin E and K, including two hydroxylations at C17 and C18, one alcohol oxidation at C17, one epoxidation at C6 and C7 and two Baeyer-Villiger oxidations. The oxidative modification at C17, C18 and the C6-C7 epoxidation are likely to be catalyzed by the two cytochrome P450 oxygenases ccsD and ccsG. CcsD may be responsible for the epoxidation of the C6-C7 double bond. CcsG may be responsible for the successive oxidative modifications at C17 and C18. The double Baeyer-Villiger oxidations of ketocytochalasin to precytochalasin and cytochalasin Z(16) are among the final steps leading to cytochalasin E and K and are catalyzed by ccsB. The first oxygen insertion step follows that of the classic BVMO mechanism, generating the ester precytochalasin. Release of precytochalasin into an aqueous environment can generate the shunt product iso-precytochalasin through spontaneous isomerization. Alternatively, precytochalasin can undergo further oxidation by ccsB to yield the in-line carbonate-containing cytochalasin Z(16). Cytochalasin Z(16) is a precursor to cytochalasin E and cytochalasin K, whereas iso-precytochalasin is a precursor to cytochalasin Z(17) and rosellichalasin. The hydrolyase ccsE may catalyze hydrolysis of epoxide bond in cytochalasin E to afford cytochalasin K. The function of ccsF has not been assigned but it may play a role in post-PKS-NRPS biosynthetic step, resistance or transport of cytochalasins and related PKS-NRPS products. This chain is Cytochrome P450 monooxygenase ccsG, found in Aspergillus clavatus (strain ATCC 1007 / CBS 513.65 / DSM 816 / NCTC 3887 / NRRL 1 / QM 1276 / 107).